Consider the following 83-residue polypeptide: MQNDAGEFVDLYVPRKCSASNRIIGAKDHASIQMNVAEVDKVTGRFNGQFKTYAICGAIRRMGESDDSILRLAKSDGIVSQNF.

N-acetylmethionine is present on methionine 1. Lysine 41 is covalently cross-linked (Glycyl lysine isopeptide (Lys-Gly) (interchain with G-Cter in SUMO2)).

Belongs to the eukaryotic ribosomal protein eS21 family. As to quaternary structure, component of the 40S small ribosomal subunit.

The protein localises to the cytoplasm. It localises to the cytosol. Its subcellular location is the rough endoplasmic reticulum. Its function is as follows. Component of the small ribosomal subunit. The ribosome is a large ribonucleoprotein complex responsible for the synthesis of proteins in the cell. In Oryctolagus cuniculus (Rabbit), this protein is Small ribosomal subunit protein eS21 (RPS21).